The primary structure comprises 178 residues: Interleukin-10 (178 aa).

A signal peptide spans methionine 1–isoleucine 18. N-linked (GlcNAc...) asparagine glycosylation occurs at asparagine 29. Intrachain disulfides connect cysteine 30–cysteine 126 and cysteine 80–cysteine 132. Residue asparagine 134 is glycosylated (N-linked (GlcNAc...) asparagine).

Belongs to the IL-10 family. Homodimer. Interacts with IL10RA and IL10RB.

It is found in the secreted. Its function is as follows. Major immune regulatory cytokine that acts on many cells of the immune system where it has profound anti-inflammatory functions, limiting excessive tissue disruption caused by inflammation. Mechanistically, IL10 binds to its heterotetrameric receptor comprising IL10RA and IL10RB leading to JAK1 and STAT2-mediated phosphorylation of STAT3. In turn, STAT3 translocates to the nucleus where it drives expression of anti-inflammatory mediators. Targets antigen-presenting cells (APCs) such as macrophages and monocytes and inhibits their release of pro-inflammatory cytokines including granulocyte-macrophage colony-stimulating factor /GM-CSF, granulocyte colony-stimulating factor/G-CSF, IL-1 alpha, IL-1 beta, IL-6, IL-8 and TNF-alpha. Also interferes with antigen presentation by reducing the expression of MHC-class II and co-stimulatory molecules, thereby inhibiting their ability to induce T cell activation. In addition, controls the inflammatory response of macrophages by reprogramming essential metabolic pathways including mTOR signaling. In Mus musculus (Mouse), this protein is Interleukin-10 (Il10).